Reading from the N-terminus, the 207-residue chain is LexA repressor (207 aa).

The H-T-H motif DNA-binding region spans 28–48 (VREIGEAVGLASSFTVHGHLS). Catalysis depends on for autocatalytic cleavage activity residues Ser-130 and Lys-168.

The protein belongs to the peptidase S24 family. In terms of assembly, homodimer.

The enzyme catalyses Hydrolysis of Ala-|-Gly bond in repressor LexA.. Functionally, represses a number of genes involved in the response to DNA damage (SOS response), including recA and lexA. In the presence of single-stranded DNA, RecA interacts with LexA causing an autocatalytic cleavage which disrupts the DNA-binding part of LexA, leading to derepression of the SOS regulon and eventually DNA repair. The chain is LexA repressor from Staphylococcus aureus (strain Newman).